Reading from the N-terminus, the 241-residue chain is MLTKFLSLLLLLLLLGCAFCNSDGSQSLHMLQISYFPDPYHGRHQGNASLGKLLTHTLEGPSNNVTILQLQDWQDPDSWARTESGLKIYLSQFNSLVQLIYRERKNDVVFPLTVSCSVGCELPPEEGSEPHVFFDVAVNGSAFVSFQPKTAIWVTGSQEPSEAINFTLKQLNTYNRTRYELQEFLQDTCVQYLENHITTQNTKGSQTGRSYTSLVLGILMGCFIIAGVAVGIFLCTGGRRC.

Positions 1–20 (MLTKFLSLLLLLLLLGCAFC) are cleaved as a signal peptide. Residues 21-213 (NSDGSQSLHM…GSQTGRSYTS (193 aa)) are Extracellular-facing. N-linked (GlcNAc...) asparagine glycosylation is found at Asn47, Asn64, Asn139, Asn165, and Asn175. A helical transmembrane segment spans residues 214-234 (LVLGILMGCFIIAGVAVGIFL). The Cytoplasmic segment spans residues 235-241 (CTGGRRC).

It localises to the membrane. Its function is as follows. Binds activated protein C. Enhances protein C activation by the thrombin-thrombomodulin complex; plays a role in the protein C pathway controlling blood coagulation. This Rattus norvegicus (Rat) protein is Endothelial protein C receptor (Procr).